Reading from the N-terminus, the 845-residue chain is Translation initiation factor IF-2 (845 aa).

The disordered stretch occupies residues 1 to 260 (MSDEQDKPTL…HMTSSGPREK (260 aa)). The span at 68-81 (APAPAPAAPRPAAP) shows a compositional bias: pro residues. The span at 101–140 (REAEEARMAALEENRRREEAERARAAEEERARAEKREEQA) shows a compositional bias: basic and acidic residues. 2 stretches are compositionally biased toward low complexity: residues 141 to 166 (ATKA…APPA) and 173 to 191 (TAAR…RFTP). Residues 194–215 (ALKRPEPKRPEPKASRGGENRR) are compositionally biased toward basic and acidic residues. The tr-type G domain occupies 344–514 (PRAPVVTIMG…ALQAEIMELK (171 aa)). Positions 353–360 (GHVDHGKT) are G1. 353–360 (GHVDHGKT) contributes to the GTP binding site. The interval 378 to 382 (GITQH) is G2. Positions 400-403 (DTPG) are G3. Residues 400-404 (DTPGH) and 454-457 (NKVD) each bind GTP. A G4 region spans residues 454–457 (NKVD). The segment at 490 to 492 (SAL) is G5.

It belongs to the TRAFAC class translation factor GTPase superfamily. Classic translation factor GTPase family. IF-2 subfamily.

The protein resides in the cytoplasm. In terms of biological role, one of the essential components for the initiation of protein synthesis. Protects formylmethionyl-tRNA from spontaneous hydrolysis and promotes its binding to the 30S ribosomal subunits. Also involved in the hydrolysis of GTP during the formation of the 70S ribosomal complex. In Sphingopyxis alaskensis (strain DSM 13593 / LMG 18877 / RB2256) (Sphingomonas alaskensis), this protein is Translation initiation factor IF-2.